We begin with the raw amino-acid sequence, 303 residues long: Ribosomal RNA small subunit methyltransferase A (303 aa).

The segment covering 1-19 has biased composition (low complexity); that stretch reads MSSRPPASFSATFSAARSS. Positions 1-34 are disordered; it reads MSSRPPASFSATFSAARSSKCVPPPRRPSTDVSL. The S-adenosyl-L-methionine site is built by H55, L57, G82, E104, D130, and N149.

This sequence belongs to the class I-like SAM-binding methyltransferase superfamily. rRNA adenine N(6)-methyltransferase family. RsmA subfamily.

It localises to the cytoplasm. The catalysed reaction is adenosine(1518)/adenosine(1519) in 16S rRNA + 4 S-adenosyl-L-methionine = N(6)-dimethyladenosine(1518)/N(6)-dimethyladenosine(1519) in 16S rRNA + 4 S-adenosyl-L-homocysteine + 4 H(+). In terms of biological role, specifically dimethylates two adjacent adenosines (A1518 and A1519) in the loop of a conserved hairpin near the 3'-end of 16S rRNA in the 30S particle. May play a critical role in biogenesis of 30S subunits. The protein is Ribosomal RNA small subunit methyltransferase A of Gluconobacter oxydans (strain 621H) (Gluconobacter suboxydans).